The chain runs to 62 residues: DNA-directed RNA polymerase subunit Rpo10 (62 aa).

Residues Cys-6, Cys-9, Cys-43, and Cys-44 each coordinate Zn(2+).

It belongs to the archaeal Rpo10/eukaryotic RPB10 RNA polymerase subunit family. As to quaternary structure, part of the RNA polymerase complex. Zn(2+) is required as a cofactor.

The protein resides in the cytoplasm. It catalyses the reaction RNA(n) + a ribonucleoside 5'-triphosphate = RNA(n+1) + diphosphate. In terms of biological role, DNA-dependent RNA polymerase (RNAP) catalyzes the transcription of DNA into RNA using the four ribonucleoside triphosphates as substrates. The chain is DNA-directed RNA polymerase subunit Rpo10 from Methanoregula boonei (strain DSM 21154 / JCM 14090 / 6A8).